We begin with the raw amino-acid sequence, 192 residues long: Der GTPase-activating protein YihI (192 aa).

The segment at 1–80 is disordered; the sequence is MSRTKKTRRI…KAAVKEVKDP (80 aa). Basic and acidic residues-rich tracts occupy residues 9–25, 37–48, and 65–80; these read RITD…KPEQ, TRYELDAKAREE, and DPAE…VKDP.

The protein belongs to the YihI family. As to quaternary structure, interacts with Der.

In terms of biological role, a GTPase-activating protein (GAP) that modifies Der/EngA GTPase function. May play a role in ribosome biogenesis. The sequence is that of Der GTPase-activating protein YihI from Actinobacillus pleuropneumoniae serotype 7 (strain AP76).